The sequence spans 704 residues: Translin-associated factor X-interacting protein 1 (704 aa).

Residues 1–37 form a disordered region; that stretch reads MANLQERKSFSKPRISIQASGGTPEAKGIEKRKLSQK. Coiled coils occupy residues 190–230 and 304–342; these read EISV…AEEY and RRDLEMQEKTNMELQEQLESLKADYEEVQKEHELLLQLH.

As to quaternary structure, interacts with TSNAX. In terms of tissue distribution, specifically expressed in testes. Predominantly detected in the post-meiotic stages of germ cells.

It is found in the cytoplasm. The protein localises to the perinuclear region. In terms of biological role, possible role in spermatogenesis. This is Translin-associated factor X-interacting protein 1 from Mus musculus (Mouse).